Here is a 95-residue protein sequence, read N- to C-terminus: Small ribosomal subunit protein uS17 (95 aa).

The protein belongs to the universal ribosomal protein uS17 family. As to quaternary structure, part of the 30S ribosomal subunit.

Its function is as follows. One of the primary rRNA binding proteins, it binds specifically to the 5'-end of 16S ribosomal RNA. This is Small ribosomal subunit protein uS17 from Streptomyces coelicolor (strain ATCC BAA-471 / A3(2) / M145).